Reading from the N-terminus, the 180-residue chain is MIIYLHGFDSNSPGNHEKVLQLQFIDPDVRLVSYSTRHPKHDMQHLLKEVDKMLQLNVDERPLICGVGLGGYWAERIGFLCDIRQVVFNPNLFPYENMEGKIDRPEEYADIDTKCVTNFREKNRDRCLVILSRHDEALDSQRSAQALHPYYEIVWDEEQTHKFKNISPHLQRIKAFKTLG.

This sequence belongs to the UPF0227 family.

The protein is UPF0227 protein YcfP of Salmonella gallinarum (strain 287/91 / NCTC 13346).